Consider the following 304-residue polypeptide: Non-specific ribonucleoside hydrolase RihC (304 aa).

The active site involves His233.

Belongs to the IUNH family. RihC subfamily.

Hydrolyzes both purine and pyrimidine ribonucleosides with a broad-substrate specificity. This is Non-specific ribonucleoside hydrolase RihC from Escherichia coli (strain 55989 / EAEC).